The primary structure comprises 142 residues: Nucleoside diphosphate kinase (142 aa).

Residues K11, F59, R87, T93, R104, and N114 each coordinate ATP. H117 serves as the catalytic Pros-phosphohistidine intermediate.

It belongs to the NDK family. In terms of assembly, homotetramer. It depends on Mg(2+) as a cofactor.

It is found in the cytoplasm. The enzyme catalyses a 2'-deoxyribonucleoside 5'-diphosphate + ATP = a 2'-deoxyribonucleoside 5'-triphosphate + ADP. The catalysed reaction is a ribonucleoside 5'-diphosphate + ATP = a ribonucleoside 5'-triphosphate + ADP. Its function is as follows. Major role in the synthesis of nucleoside triphosphates other than ATP. The ATP gamma phosphate is transferred to the NDP beta phosphate via a ping-pong mechanism, using a phosphorylated active-site intermediate. The sequence is that of Nucleoside diphosphate kinase from Yersinia pestis bv. Antiqua (strain Antiqua).